Consider the following 116-residue polypeptide: Putative UPF0320 protein YLL065W (116 aa).

This sequence belongs to the UPF0320 family.

The chain is Putative UPF0320 protein YLL065W from Saccharomyces cerevisiae (strain ATCC 204508 / S288c) (Baker's yeast).